We begin with the raw amino-acid sequence, 549 residues long: Glucose-6-phosphate isomerase (549 aa).

Residue E355 is the Proton donor of the active site. Catalysis depends on residues H387 and K515.

The protein belongs to the GPI family.

It localises to the cytoplasm. It carries out the reaction alpha-D-glucose 6-phosphate = beta-D-fructose 6-phosphate. Its pathway is carbohydrate biosynthesis; gluconeogenesis. It functions in the pathway carbohydrate degradation; glycolysis; D-glyceraldehyde 3-phosphate and glycerone phosphate from D-glucose: step 2/4. Functionally, catalyzes the reversible isomerization of glucose-6-phosphate to fructose-6-phosphate. This Haemophilus influenzae (strain 86-028NP) protein is Glucose-6-phosphate isomerase.